Here is a 39-residue protein sequence, read N- to C-terminus: Protein MchX (39 aa).

A helical membrane pass occupies residues 15 to 37 (SALSSTLLLSLIMSATLLEYSLS).

Its subcellular location is the cell inner membrane. In terms of biological role, required for microcin H47 production. Possibly involved in a regulatory loop modulating its own expression and that of MchI and MchB. This chain is Protein MchX (mchX), found in Escherichia coli.